The sequence spans 722 residues: D-galactosyl-beta-1-&gt;4-L-rhamnose phosphorylase (722 aa).

D319 acts as the Proton donor in catalysis.

It belongs to the glycoside hydrolase 112 family.

The enzyme catalyses beta-D-galactosyl-(1-&gt;4)-L-rhamnose + phosphate = alpha-D-galactose 1-phosphate + L-rhamnopyranose. Its function is as follows. Reversibly phosphorolyzes beta-D-galactosyl-(1-&gt;4)-L-rhamnose to form alpha-D-galactose 1-phosphate and L-rhamnose. Does not phosphorolyze galacto-N-biose or lacto-N-biose. In the reverse reaction, has the highest activity toward L-rhamnose, also has activity toward L-mannose, and low activity toward L-lyxose, D-glucose, 2-deoxy-D-glucose and D-galactose. The protein is D-galactosyl-beta-1-&gt;4-L-rhamnose phosphorylase of Lachnoclostridium phytofermentans (strain ATCC 700394 / DSM 18823 / ISDg) (Clostridium phytofermentans).